A 2150-amino-acid chain; its full sequence is Hybrid signal transduction histidine kinase A (2150 aa).

The span at 1-10 shows a compositional bias: basic and acidic residues; it reads MELKTFKDLN. Disordered regions lie at residues 1-41, 68-149, 184-267, 286-323, 339-359, 415-505, 520-546, and 560-733; these read MELK…QQQQ, HIPQ…YYYS, NSSS…HQRR, KNKP…GSLG, TEES…NCGS, NNNN…NSPR, SLTS…GRNG, and KPVV…NGAT. Over residues 19 to 32 the composition is skewed to polar residues; it reads PVINTGDQPNPLRT. Positions 68–81 are enriched in low complexity; that stretch reads HIPQQLYQKQQQQQ. The segment covering 82-104 has biased composition (polar residues); the sequence is HSHSYGNHSFIHNVSPTSPSYDI. Composition is skewed to low complexity over residues 105-145 and 184-244; these read NNNN…YNNN and NSSS…NNNI. A compositionally biased stretch (polar residues) spans 289 to 304; it reads PLSSSTPSTVNTCGAV. 3 stretches are compositionally biased toward low complexity: residues 305 to 318, 344 to 359, and 415 to 447; these read NNNS…NNNS, GGNN…NCGS, and NNNN…HNIS. The segment covering 448–468 has biased composition (polar residues); the sequence is PRGSNISPRSNNGGSTTISPR. Composition is skewed to low complexity over residues 469–485, 520–545, and 565–600; these read NISN…NNNI, SLTS…NGRN, and NNGN…INNN. The span at 614–628 shows a compositional bias: polar residues; sequence SKTNSLQDFETSSMN. A compositionally biased stretch (low complexity) spans 657–727; sequence NSNNTNSNNS…NNNNNNNNNN (71 aa). The chain crosses the membrane as a helical span at residues 772-792; that stretch reads AIILGLFIVGSSISILATLVL. Residues 838–1082 form the CHASE domain; it reads STSEDQFVPF…NVGGRNWMIA (245 aa). Residues 1098–1118 traverse the membrane as a helical segment; it reads PYAIGGVCMLLSALVSFWFAV. Residues 1139 to 1164 are a coiled coil; that stretch reads NRKLAEKALAESQERLELAMEGSEDA. Disordered regions lie at residues 1209 to 1228 and 1233 to 1252; these read LNFK…FNLF and VDSS…GGGG. The PAS domain maps to 1235–1317; sequence SSSPQSITNV…SEIKKTITRE (83 aa). In terms of domain architecture, PAC spans 1321 to 1376; the sequence is MEIECRMRKKYGGYLYIIMRGKVVSNETSFKDNSLRMAGTLRDMTSRKDMQRLILE. The Histidine kinase domain occupies 1393 to 1620; that stretch reads TVSHEVRTPL…KFKCIIPFLL (228 aa). The residue at position 1396 (histidine 1396) is a Phosphohistidine; by autocatalysis. Disordered stretches follow at residues 1874–1893, 1933–1952, and 1962–2017; these read GGGS…NNNF, HGNQ…NNSS, and QNNN…DTPV. 3 stretches are compositionally biased toward low complexity: residues 1878–1893, 1935–1952, and 1962–2002; these read NTMN…NNNF, NQQQ…NNSS, and QNNN…TPTL. The Response regulatory domain maps to 2026–2146; the sequence is KALIVEDNEL…TLKDALAKWG (121 aa). Aspartate 2076 is modified (4-aspartylphosphate).

In terms of assembly, interacts with SDF-2, an acbA peptide involved in sporulation.

It is found in the cell membrane. It carries out the reaction ATP + protein L-histidine = ADP + protein N-phospho-L-histidine.. Its function is as follows. Acts as a receptor histidine kinase for the cytokinin SDF-2 in a signal transduction pathway that regulates prestalk gene expression and controls terminal differentiation of prespore cells. Binding of SDF-2 to this protein inhibits phosphorelay and induces rapid sporulation. This protein undergoes an ATP-dependent autophosphorylation at a conserved histidine residue in the kinase core, and a phosphoryl group is then transferred to a conserved aspartate residue in the receiver domain. The sequence is that of Hybrid signal transduction histidine kinase A (dhkA) from Dictyostelium discoideum (Social amoeba).